Reading from the N-terminus, the 81-residue chain is 8.6 kDa transglutaminase substrate (81 aa).

In terms of assembly, multimeric. Hemolymph; Hemocyte.

The sequence is that of 8.6 kDa transglutaminase substrate from Tachypleus tridentatus (Japanese horseshoe crab).